Reading from the N-terminus, the 231-residue chain is Ribose-5-phosphate isomerase A (231 aa).

Substrate contacts are provided by residues 40–43, 93–96, and 106–109; these read TGST, DGAD, and KGGG. Residue glutamate 115 is the Proton acceptor of the active site. Substrate is bound at residue lysine 133.

This sequence belongs to the ribose 5-phosphate isomerase family. Homodimer.

It carries out the reaction aldehydo-D-ribose 5-phosphate = D-ribulose 5-phosphate. Its pathway is carbohydrate degradation; pentose phosphate pathway; D-ribose 5-phosphate from D-ribulose 5-phosphate (non-oxidative stage): step 1/1. In terms of biological role, catalyzes the reversible conversion of ribose-5-phosphate to ribulose 5-phosphate. In Escherichia coli O6:K15:H31 (strain 536 / UPEC), this protein is Ribose-5-phosphate isomerase A.